The sequence spans 624 residues: ADP,ATP carrier protein 1, chloroplastic (624 aa).

A chloroplast-targeting transit peptide spans 1–79 (MEAVIQTRGL…KERSTEFICK (79 aa)). At Ala-80 the chain carries N-acetylalanine. 6 helical membrane passes run 108–128 (VEVATLKKIIPLGLMFFCILF), 182–202 (ALFYTVIVPFIIYFGAFGFVM), 240–260 (LFYVMAELWGSVVVSVLFWGF), 315–335 (AMMSIVVGMGLAICLLYWWVN), 446–466 (LLTGVAFFSLILFGGPFAPLV), and 545–565 (LANSTPYLGMILLVIVTAWLA). The tract at residues 579-624 (SEEELEKEMERASSVKIPVVSQDESGNGSLGESPSSSPEKSAPTNL) is disordered. Residues 602 to 624 (ESGNGSLGESPSSSPEKSAPTNL) show a composition bias toward low complexity.

It belongs to the ADP/ATP translocase tlc (TC 2.A.12.2) family.

The protein localises to the plastid. It is found in the chloroplast membrane. Its function is as follows. May function as an ATP importer. This is ADP,ATP carrier protein 1, chloroplastic (AATP1) from Arabidopsis thaliana (Mouse-ear cress).